The chain runs to 1185 residues: Structural maintenance of chromosomes protein 6 (1185 aa).

A disordered region spans residues 1-144 (MSKRKLGHDG…QQLKSGVTEP (144 aa)). The span at 15–29 (LDEEEEEEEEDDDDE) shows a compositional bias: acidic residues. Positions 35 to 48 (QDQDRPHKQQRVEN) are enriched in basic and acidic residues. Acidic residues-rich tracts occupy residues 80–98 (SDEESGSSEDDDEDVEDVD) and 106–128 (SSDDDDDDDDDDDDDDGNSEDER). 176 to 183 (GENGSGKS) serves as a coordination point for ATP. A coiled-coil region spans residues 337–570 (LSQKVVVIQE…QLNNLRSTQK (234 aa)). Positions 571 to 807 (GENQAYGKGM…HKISQNDQDQ (237 aa)) are flexible hinge. Residues 808 to 1024 (NQCSRKILQI…TILERNLNER (217 aa)) are a coiled coil.

The protein belongs to the SMC family. SMC6 subfamily. Forms a heterodimer with smc5.

It localises to the nucleus. Its subcellular location is the chromosome. Functionally, core component of the smc5-smc6 complex, a complex involved in DNA double-strand breaks by homologous recombination. The complex may promote sister chromatid homologous recombination by recruiting the smc1-smc3 cohesin complex to double-strand breaks. The polypeptide is Structural maintenance of chromosomes protein 6 (smc6) (Dictyostelium discoideum (Social amoeba)).